Consider the following 76-residue polypeptide: Protein sigN132 (76 aa).

The span at 1–13 (MLFESISTLSNLK) shows a compositional bias: polar residues. Positions 1 to 33 (MLFESISTLSNLKSASKSSMIASTGSTSSKSSN) are disordered. The segment covering 14 to 33 (SASKSSMIASTGSTSSKSSN) has biased composition (low complexity).

In Dictyostelium discoideum (Social amoeba), this protein is Protein sigN132.